Consider the following 916-residue polypeptide: Ubiquitin carboxyl-terminal hydrolase 20 (916 aa).

The segment at 6–111 adopts a UBP-type zinc-finger fold; the sequence is DLCPHLDCIG…SSSARLSEQD (106 aa). The Zn(2+) site is built by Cys8, His10, Cys30, Cys33, Cys43, Cys48, Cys53, His60, His64, His70, Cys83, and Cys86. Residues Ser112, Ser132, and Ser134 each carry the phosphoserine modification. The 543-residue stretch at 145-687 folds into the USP domain; the sequence is TGMKNLGNSC…EAYVLFYRKS (543 aa). Cys154 functions as the Nucleophile in the catalytic mechanism. The tract at residues 258–420 is disordered; that stretch reads LTDARDSDSS…PPRASPVRMG (163 aa). Thr259 carries the phosphothreonine modification. Positions 260 to 280 are enriched in basic and acidic residues; that stretch reads DARDSDSSDTDERRDGDRSPS. A Phosphoserine modification is found at Ser306. Residues 317–333 show a composition bias toward basic and acidic residues; sequence EAGRAISEKERMKDRKF. Phosphoserine is present on Ser369. Thr378 is subject to Phosphothreonine. Phosphoserine is present on residues Ser410 and Ser415. The active-site Proton acceptor is His645. 2 DUSP domains span residues 689-782 and 791-894; these read EEAM…LYVC and ALAK…RQSV.

Belongs to the peptidase C19 family. USP20/USP33 subfamily. As to quaternary structure, interacts with VHL, leading to its ubiquitination and subsequent degradation. Interacts with CCP110. Interacts with DIO2. Interacts with HIF1A. Interacts with ADRB2. Interacts with USP18. Post-translationally, ubiquitinated via a VHL-dependent pathway for proteasomal degradation.

It localises to the cytoplasm. The protein resides in the endoplasmic reticulum. Its subcellular location is the perinuclear region. The protein localises to the cytoskeleton. It is found in the microtubule organizing center. It localises to the centrosome. It carries out the reaction Thiol-dependent hydrolysis of ester, thioester, amide, peptide and isopeptide bonds formed by the C-terminal Gly of ubiquitin (a 76-residue protein attached to proteins as an intracellular targeting signal).. Deubiquitinating enzyme that plays a role in many cellular processes including autophagy, cellular antiviral response or membrane protein biogenesis. Attenuates TLR4-mediated NF-kappa-B signaling by cooperating with beta-arrestin-2/ARRB2 and inhibiting TRAF6 autoubiquitination. Promotes cellular antiviral responses by deconjugating 'Lys-33' and 'Lys-48'-linked ubiquitination of STING1 leading to its stabilization. Plays an essential role in autophagy induction by regulating the ULK1 stability through deubiquitination of ULK1. Acts as a positive regulator for NF-kappa-B activation by TNF-alpha through deubiquitinating 'Lys-48'-linked polyubiquitination of SQSTM1, leading to its increased stability. Acts as a regulator of G-protein coupled receptor (GPCR) signaling by mediating the deubiquitination beta-2 adrenergic receptor (ADRB2). Plays a central role in ADRB2 recycling and resensitization after prolonged agonist stimulation by constitutively binding ADRB2, mediating deubiquitination of ADRB2 and inhibiting lysosomal trafficking of ADRB2. Upon dissociation, it is probably transferred to the translocated beta-arrestins, possibly leading to beta-arrestins deubiquitination and disengagement from ADRB2. This suggests the existence of a dynamic exchange between the ADRB2 and beta-arrestins. Deubiquitinates DIO2, thereby regulating thyroid hormone regulation. Deubiquitinates HIF1A, leading to stabilize HIF1A and enhance HIF1A-mediated activity. Deubiquitinates MCL1, a pivotal member of the anti-apoptotic Bcl-2 protein family to regulate its stability. Within the endoplasmic reticulum, participates with USP33 in the rescue of post-translationally targeted membrane proteins that are inappropriately ubiquitinated by the cytosolic protein quality control in the cytosol. The polypeptide is Ubiquitin carboxyl-terminal hydrolase 20 (Usp20) (Mus musculus (Mouse)).